The sequence spans 343 residues: GTPase Obg (343 aa).

The Obg domain maps to 1 to 159; the sequence is MKFVDSASIF…LQLDMELKLM (159 aa). Residues 121-144 form a disordered region; it reads GHGGRGNQHFATSTNQAPRRSEPG. A compositionally biased stretch (polar residues) spans 129 to 138; sequence HFATSTNQAP. Residues 160–323 enclose the OBG-type G domain; it reads ADVGLVGFPN…LKDELWREVS (164 aa). GTP contacts are provided by residues 166 to 173, 191 to 195, 213 to 216, 280 to 283, and 304 to 306; these read GFPNAGKS, FTTLV, DIPG, TKMD, and SSV. Residues Ser173 and Thr193 each contribute to the Mg(2+) site. The disordered stretch occupies residues 322–343; that stretch reads VSMRDRPEESSDPEGEGDGGTP. Residues 331-343 are compositionally biased toward acidic residues; the sequence is SSDPEGEGDGGTP.

Belongs to the TRAFAC class OBG-HflX-like GTPase superfamily. OBG GTPase family. In terms of assembly, monomer. The cofactor is Mg(2+).

It is found in the cytoplasm. Its function is as follows. An essential GTPase which binds GTP, GDP and possibly (p)ppGpp with moderate affinity, with high nucleotide exchange rates and a fairly low GTP hydrolysis rate. Plays a role in control of the cell cycle, stress response, ribosome biogenesis and in those bacteria that undergo differentiation, in morphogenesis control. The polypeptide is GTPase Obg (Chlorobium luteolum (strain DSM 273 / BCRC 81028 / 2530) (Pelodictyon luteolum)).